Consider the following 55-residue polypeptide: Eclosion hormone (55 aa).

Belongs to the insect eclosion hormone family.

Its subcellular location is the secreted. Functionally, neuropeptide that triggers the performance of ecdysis behaviors at the end of a molt. It triggers adult behavior patterns: larval, pupal and adult ecdysis, and plasticization during the molt. This chain is Eclosion hormone, found in Romalea microptera (Eastern lubber grasshopper).